A 380-amino-acid polypeptide reads, in one-letter code: Homeobox protein ceh-6 (380 aa).

Over residues 1 to 25 (MLIPSSSSIPSSLSASASDSEPSSL) the composition is skewed to low complexity. 3 disordered regions span residues 1-31 (MLIP…SGIS), 167-190 (SGSV…SEQT), and 265-286 (GSPN…KKRT). In terms of domain architecture, POU-specific spans 187–261 (SEQTCPDDLE…LLFKWLEEAD (75 aa)). The homeobox DNA-binding region spans 281–340 (KRKKRTSIEVNVKSRLEFHFQSNQKPNAQEITQVAMELQLEKEVVRVWFCNRRQKEKRIA).

This sequence belongs to the POU transcription factor family. Class-3 subfamily. As to quaternary structure, interacts with egl-27, sox-2 and sem-4. Interacts with wdr-5.1. Expressed in a series of neurons in the ring ganglia, excretory cell, dividing neuroblasts in the ventral cord and rectal cells.

It localises to the nucleus. Vital for embryonic development and essential for the proper function of the excretory cell. Required for the transdifferentiation of the Y rectal epithelial cell to the PDA motor neuron during larval development. This Caenorhabditis elegans protein is Homeobox protein ceh-6.